The chain runs to 295 residues: Glutamyl-Q tRNA(Asp) synthetase (295 aa).

L-glutamate is bound by residues arginine 5–serine 9 and glutamate 41. A 'HIGH' region motif is present at residues proline 8–serine 18. Positions 97, 99, 117, and 121 each coordinate Zn(2+). Residues tyrosine 178 and arginine 196 each coordinate L-glutamate. A 'KMSKS' region motif is present at residues lysine 234–glutamine 238. Lysine 237 lines the ATP pocket.

Belongs to the class-I aminoacyl-tRNA synthetase family. GluQ subfamily. Zn(2+) serves as cofactor.

Functionally, catalyzes the tRNA-independent activation of glutamate in presence of ATP and the subsequent transfer of glutamate onto a tRNA(Asp). Glutamate is transferred on the 2-amino-5-(4,5-dihydroxy-2-cyclopenten-1-yl) moiety of the queuosine in the wobble position of the QUC anticodon. This is Glutamyl-Q tRNA(Asp) synthetase from Neisseria meningitidis serogroup B (strain ATCC BAA-335 / MC58).